A 627-amino-acid polypeptide reads, in one-letter code: MPGTKRYQHVIETPEPGEWELSGYEAAVPITEKSNPLTRNLDKADAEKIVKLLGQCDAEIFQEEGQIVPTYQRLYSESVLTTMLQVAGKVQEVLKEPDGGLVVLSGGGTSGRMAFLMSVSFNQLMKGLGQKPLYTYLIAGGDRSVVASREQTEDSALHGIEELKKVAAGKKRVVVIGISVGLSAPFVAGQMDYCMDNTAVFLPVLVGFNPVSMARNDPIEDWRSTFRQVAERMQKMQEKQEAFVLNPAIGPEGLSGSSRMKGGGATKILLETLLLAAHKTVDQGVVSSQRCLLEILRTFERAHQVTYSQSSKIATLMKQVGISLEKKGRVHLVGWQTLGIIAIMDGVECIHTFGADFQDIRGFLIGDHSDMFNQKDELTNQGPQFTFSQDDFLTSILPSLTETDTVVFIFTLDDNLTEVQALAERVREKCQNIQALVHSTVGQSLPAPLKKLFPSLISITWPLLFFDYEGTYVQKFQRELSTKWVLNTVSTGAHVLLGKILQNHMLDLRIANSKLFWRALAMLQRFSGQSKARCIESLLQAIHFPQPLSDDVRAAPISCHVQVAHEKEKVIPTALLSLLLRCSISEAKARLSAASSVCEVVRSALSGPGQKRSTQALEDPPACGTLN.

2 SIS domains span residues 90 to 286 and 320 to 499; these read VQEV…QGVV and VGIS…LLGK. Beta-D-fructose 1-phosphate is bound by residues 109 to 110, Glu153, and 179 to 181; these read TS and SVG. 109–110 serves as a coordination point for beta-D-fructose 6-phosphate; the sequence is TS. 179 to 181 provides a ligand contact to beta-D-fructose 6-phosphate; sequence SVG. Residues 199-200 are important for interaction with GCK; the sequence is AV. Glu348 contacts beta-D-fructose 1-phosphate. The interval 463–465 is essential for interaction with GCK; it reads LLF. Beta-D-fructose 1-phosphate is bound at residue Lys514. Lys514 lines the beta-D-fructose 6-phosphate pocket.

It belongs to the GCKR family. In terms of assembly, interacts (fructose 6-phosphate bound form) with GCK. In terms of tissue distribution, detected in liver (at protein level). Not detected in muscle, brain, heart, testis, intestine or spleen.

Its subcellular location is the cytoplasm. The protein resides in the nucleus. It localises to the mitochondrion. Functionally, regulates glucokinase (GCK) by forming an inactive complex with this enzyme. Acts by promoting GCK recruitment to the nucleus, possibly to provide a reserve of GCK that can be quickly released in the cytoplasm after a meal. The affinity of GCKR for GCK is modulated by fructose metabolites: GCKR with bound fructose 6-phosphate has increased affinity for GCK, while GCKR with bound fructose 1-phosphate has strongly decreased affinity for GCK and does not inhibit GCK activity. The sequence is that of Glucokinase regulatory protein from Rattus norvegicus (Rat).